Reading from the N-terminus, the 524-residue chain is Bifunctional NAD(P)H-hydrate repair enzyme Nnr (524 aa).

Residues 1–219 (MKVARVSEIK…ISYPRALLED (219 aa)) are NAD(P)H-hydrate epimerase. The YjeF N-terminal domain maps to 9 to 218 (IKLLDREAAE…HISYPRALLE (210 aa)). Residues 57-61 (NNGGD) form an NADPHX 1; for epimerase activity region. Positions 58 and 128 each coordinate K(+). The segment at 132-138 (GTGLSRP) is NADPHX 1; for epimerase activity. Positions 143 and 161 each coordinate (6S)-NADPHX. S164 provides a ligand contact to K(+). One can recognise a YjeF C-terminal domain in the interval 224–507 (VETNDPVPLP…NYLPKALRAL (284 aa)). Positions 224–524 (VETNDPVPLP…LERYTIKVLP (301 aa)) are ADP-dependent (S)-NAD(P)H-hydrate dehydratase. G330 is a binding site for (6S)-NADPHX. Residues 381–387 (HAGEMSR) form an NADPHX 2; for dehydratase activity region. ADP-binding positions include 418–422 (KGAHT) and 438–447 (NPGMATAGSG). A (6S)-NADPHX-binding site is contributed by D448.

This sequence in the N-terminal section; belongs to the NnrE/AIBP family. The protein in the C-terminal section; belongs to the NnrD/CARKD family. Requires K(+) as cofactor.

It carries out the reaction (6S)-NADHX + ADP = AMP + phosphate + NADH + H(+). It catalyses the reaction (6S)-NADPHX + ADP = AMP + phosphate + NADPH + H(+). The enzyme catalyses (6R)-NADHX = (6S)-NADHX. The catalysed reaction is (6R)-NADPHX = (6S)-NADPHX. In terms of biological role, bifunctional enzyme that catalyzes the epimerization of the S- and R-forms of NAD(P)HX and the dehydration of the S-form of NAD(P)HX at the expense of ADP, which is converted to AMP. This allows the repair of both epimers of NAD(P)HX, a damaged form of NAD(P)H that is a result of enzymatic or heat-dependent hydration. This chain is Bifunctional NAD(P)H-hydrate repair enzyme Nnr (nnr), found in Thermofilum pendens (strain DSM 2475 / Hrk 5).